An 81-amino-acid chain; its full sequence is Insect-toxin Cn10 (81 aa).

An N-terminal signal peptide occupies residues 1–13 (ITACLVLIGTVCA). An LCN-type CS-alpha/beta domain is found at 14–79 (KEGYLVNKST…TYPIPGKTCR (66 aa)). Intrachain disulfides connect cysteine 25/cysteine 78, cysteine 29/cysteine 54, cysteine 38/cysteine 59, and cysteine 42/cysteine 61. A propeptide (removed by a carboxypeptidase) is located at residue lysine 81.

This sequence belongs to the long (4 C-C) scorpion toxin superfamily. Sodium channel inhibitor family. Beta subfamily. Expressed by the venom gland.

The protein resides in the secreted. In terms of biological role, beta toxins bind voltage-independently at site-4 of sodium channels (Nav) and shift the voltage of activation toward more negative potentials thereby affecting sodium channel activation and promoting spontaneous and repetitive firing. Is toxic on insects and crustaceans, but not on mammals. This Centruroides noxius (Mexican scorpion) protein is Insect-toxin Cn10.